Reading from the N-terminus, the 317-residue chain is Toluene-4-sulfonate monooxygenase system reductase subunit TsaB1 (317 aa).

In terms of domain architecture, FAD-binding FR-type spans 2 to 108 (SADVPVTVAA…RATCSEMAPE (107 aa)). Residue 110–220 (RRVLLLAGGI…PGSVRMERFK (111 aa)) coordinates NAD(+). Residues 230-317 (QPFELVLQRA…CGGGRLVLDI (88 aa)) enclose the 2Fe-2S ferredoxin-type domain. [2Fe-2S] cluster-binding residues include Cys-266, Cys-271, Cys-274, and Cys-304.

As to quaternary structure, monomer. Part of the p-toluenesulfonate methyl-monooxygenase complex TsaBM, comprising the reductase TsaB and the oxygenase TsaM. FMN is required as a cofactor.

Its function is as follows. Iron-sulfur flavoprotein carrying electrons from NADH to the oxygenase TsaM. Involved in the toluene-4-sulfonate degradation pathway. The chain is Toluene-4-sulfonate monooxygenase system reductase subunit TsaB1 (tsaB1) from Comamonas testosteroni (Pseudomonas testosteroni).